A 334-amino-acid polypeptide reads, in one-letter code: N-chimaerin (334 aa).

A compositionally biased stretch (polar residues) spans 1-10 (MPSKESWSGR). Residues 1-22 (MPSKESWSGRKTNRATVHKSKQ) form a disordered region. T67 is subject to Phosphothreonine. The Phorbol-ester/DAG-type zinc-finger motif lies at 80–130 (VHNFKVHTFRGPHWCEYCANFMWGLIAQGVKCADCGLNVHKQCSKMVPNDC). One can recognise a Rho-GAP domain in the interval 143 to 334 (CDLTTLVKAR…LLIKNEDILF (192 aa)). T215 bears the Phosphothreonine mark.

As to quaternary structure, interacts with EPHA4; effector of EPHA4 in axon guidance linking EPHA4 activation to RAC1 regulation. Post-translationally, phosphorylated. Phosphorylation is EPHA4 kinase activity-dependent.

Its function is as follows. GTPase-activating protein for p21-rac and a phorbol ester receptor. Involved in the assembly of neuronal locomotor circuits as a direct effector of EPHA4 in axon guidance. The sequence is that of N-chimaerin (CHN1) from Bos taurus (Bovine).